Here is a 195-residue protein sequence, read N- to C-terminus: Probable GTP-binding protein EngB (195 aa).

One can recognise an EngB-type G domain in the interval 24–195 (ELPEIALAGR…EAWDAILEKL (172 aa)). GTP-binding positions include 32–39 (GRSNVGKS), 59–63 (GKTQL), 77–80 (DVPG), 144–147 (TKAD), and 176–178 (FSS). Residues S39 and T61 each contribute to the Mg(2+) site.

Belongs to the TRAFAC class TrmE-Era-EngA-EngB-Septin-like GTPase superfamily. EngB GTPase family. Mg(2+) serves as cofactor.

In terms of biological role, necessary for normal cell division and for the maintenance of normal septation. The polypeptide is Probable GTP-binding protein EngB (Streptococcus pneumoniae serotype 4 (strain ATCC BAA-334 / TIGR4)).